The chain runs to 443 residues: Xaa-Pro dipeptidase (443 aa).

Positions 246, 257, 339, 384, and 423 each coordinate Mn(2+).

Belongs to the peptidase M24B family. Bacterial-type prolidase subfamily. It depends on Mn(2+) as a cofactor.

The catalysed reaction is Xaa-L-Pro dipeptide + H2O = an L-alpha-amino acid + L-proline. Its function is as follows. Splits dipeptides with a prolyl residue in the C-terminal position. This is Xaa-Pro dipeptidase from Salmonella paratyphi B (strain ATCC BAA-1250 / SPB7).